Consider the following 152-residue polypeptide: Ribosomal RNA large subunit methyltransferase H (152 aa).

S-adenosyl-L-methionine-binding positions include Leu69, Gly96, and 118 to 123; that span reads FGKLTF.

Belongs to the RNA methyltransferase RlmH family. In terms of assembly, homodimer.

It is found in the cytoplasm. The catalysed reaction is pseudouridine(1915) in 23S rRNA + S-adenosyl-L-methionine = N(3)-methylpseudouridine(1915) in 23S rRNA + S-adenosyl-L-homocysteine + H(+). Its function is as follows. Specifically methylates the pseudouridine at position 1915 (m3Psi1915) in 23S rRNA. This is Ribosomal RNA large subunit methyltransferase H from Mesomycoplasma hyopneumoniae (strain 232) (Mycoplasma hyopneumoniae).